A 396-amino-acid chain; its full sequence is Putative carbamoyltransferase YgeW (396 aa).

Carbamoyl phosphate-binding positions include 71–74, Gln-98, 165–168, and 330–331; these read STRT, HPTQ, and CL.

The protein belongs to the aspartate/ornithine carbamoyltransferase superfamily. In terms of assembly, homotrimer.

This Escherichia coli O157:H7 protein is Putative carbamoyltransferase YgeW (ygeW).